Reading from the N-terminus, the 394-residue chain is MVHLTPALLLASAAFAAAAPASQIFERQCSVAGNYPTAAVSKLPDPFTTAAGQKITTKADFDCRKAEISKILQQYELGTYPGKPDKVEGSLSGNTLTVRITVGSQTVSFSASIKKPSSGSGPFPAIIGIGGISIPIPSTVATITFPNDDFAQQSGTSSRGRGKFYTLFGSSHSAGALIAWAWGVDRLVDALEQVQSTSGIDPKRLGVTGCSRNGKGAFVAGALVDRIALTIPQESGAGGAACWRISDSEKSAGKNIQTASQIVTENVWFSPAFNAYTRQTTNIPADHHMLAALTVPRGLIAFENDIDWLGPVSTTACMQAGRLIYKAYGVSNHMGFSLVGGHGHCQFPSSQQSELTSYINYFLLKAGTAPGAVERSSAKVDLKSWAPWDVPALS.

A signal peptide spans 1-18 (MVHLTPALLLASAAFAAA). Cystine bridges form between cysteine 29–cysteine 63, cysteine 210–cysteine 345, and cysteine 242–cysteine 317. Residues 209–214 (GCSRNG) carry the GXSYXG catalytic site motif motif. Residue serine 211 is the Nucleophile of the active site. Substrate is bound by residues lysine 215, glutamine 257, glutamate 265, and tryptophan 308. The active-site Proton donor/acceptor is histidine 344.

It belongs to the carbohydrate esterase 15 (CE15) family.

Its subcellular location is the secreted. The catalysed reaction is a 4-O-methyl-alpha-D-glucuronosyl ester derivative + H2O = 4-O-methyl-alpha-D-glucuronate derivative + an alcohol + H(+). In terms of biological role, glucuronoyl esterase which may play a significant role in biomass degradation, as it is considered to disconnect hemicellulose from lignin through the hydrolysis of the ester bond between 4-O-methyl-D-glucuronic acid residues of glucuronoxylans and aromatic alcohols of lignin. The sequence is that of 4-O-methyl-glucuronoyl methylesterase from Neurospora crassa (strain ATCC 24698 / 74-OR23-1A / CBS 708.71 / DSM 1257 / FGSC 987).